Reading from the N-terminus, the 117-residue chain is DNA-directed RNA polymerase II subunit RPB11 (117 aa).

Met-1 is modified (N-acetylmethionine).

The protein belongs to the archaeal Rpo11/eukaryotic RPB11/RPC19 RNA polymerase subunit family. As to quaternary structure, component of the RNA polymerase II (Pol II) core complex consisting of 12 subunits: a ten-subunit catalytic core composed of POLR2A/RPB1, POLR2B/RPB2, POLR2C/RPB3, POLR2I/RPB9, POLR2J/RPB11, POLR2E/RPABC1, POLR2F/RPABC2, POLR2H/RPABC3, POLR2K/RPABC4 and POLR2L/RPABC5 and a mobile stalk composed of two subunits POLR2D/RPB4 and POLR2G/RPB7, protruding from the core and functioning primarily in transcription initiation. Part of Pol II(G) complex, in which Pol II core associates with an additional subunit POLR2M; unlike conventional Pol II, Pol II(G) functions as a transcriptional repressor. Part of TBP-based Pol II pre-initiation complex (PIC), in which Pol II core assembles with general transcription factors and other specific initiation factors including GTF2E1, GTF2E2, GTF2F1, GTF2F2, TCEA1, ERCC2, ERCC3, GTF2H2, GTF2H3, GTF2H4, GTF2H5, GTF2A1, GTF2A2, GTF2B and TBP; this large multi-subunit PIC complex mediates DNA unwinding and targets Pol II core to the transcription start site where the first phosphodiester bond forms. Interacts with AATF. Interacts with PTPN6; this interaction promotes the recruitment of RNA pol II to the PCK1 promoter.

The protein resides in the nucleus. Its function is as follows. Core component of RNA polymerase II (Pol II), a DNA-dependent RNA polymerase which synthesizes mRNA precursors and many functional non-coding RNAs using the four ribonucleoside triphosphates as substrates. The protein is DNA-directed RNA polymerase II subunit RPB11 (Polr2j) of Mus musculus (Mouse).